We begin with the raw amino-acid sequence, 303 residues long: Elongation factor Ts (303 aa).

Residues 82 to 85 (TDFV) form an involved in Mg(2+) ion dislocation from EF-Tu region.

It belongs to the EF-Ts family.

It is found in the cytoplasm. Functionally, associates with the EF-Tu.GDP complex and induces the exchange of GDP to GTP. It remains bound to the aminoacyl-tRNA.EF-Tu.GTP complex up to the GTP hydrolysis stage on the ribosome. In Clostridioides difficile (strain 630) (Peptoclostridium difficile), this protein is Elongation factor Ts.